Reading from the N-terminus, the 321-residue chain is UPF0676 protein C1494.01 (321 aa).

The 109-residue stretch at Glu159–Pro267 folds into the Fe2OG dioxygenase domain.

Belongs to the UPF0676 family.

It is found in the cytoplasm. It localises to the nucleus. This is UPF0676 protein C1494.01 from Schizosaccharomyces pombe (strain 972 / ATCC 24843) (Fission yeast).